A 93-amino-acid chain; its full sequence is Protein FptB (93 aa).

The signal sequence occupies residues 1–25 (MPRQSGFGWAWRVPLALAGSLAAAT). Helical transmembrane passes span 44–64 (LYAG…GGLL) and 71–91 (FAWR…LLAG).

Its subcellular location is the cell membrane. Functionally, may play some role in transport of Fe(3+)-pyochelin. The protein is Protein FptB (fptB) of Pseudomonas aeruginosa (strain ATCC 15692 / DSM 22644 / CIP 104116 / JCM 14847 / LMG 12228 / 1C / PRS 101 / PAO1).